The sequence spans 202 residues: dITP/XTP pyrophosphatase (202 aa).

Position 7-12 (7-12 (SNNPGK)) interacts with substrate. 2 residues coordinate Mg(2+): E39 and D68. Catalysis depends on D68, which acts as the Proton acceptor. Residues A69, 157 to 160 (FGFD), K180, and 185 to 186 (HR) each bind substrate.

This sequence belongs to the HAM1 NTPase family. In terms of assembly, homodimer. Mg(2+) serves as cofactor.

The enzyme catalyses XTP + H2O = XMP + diphosphate + H(+). The catalysed reaction is dITP + H2O = dIMP + diphosphate + H(+). It catalyses the reaction ITP + H2O = IMP + diphosphate + H(+). Its function is as follows. Pyrophosphatase that catalyzes the hydrolysis of nucleoside triphosphates to their monophosphate derivatives, with a high preference for the non-canonical purine nucleotides XTP (xanthosine triphosphate), dITP (deoxyinosine triphosphate) and ITP. Seems to function as a house-cleaning enzyme that removes non-canonical purine nucleotides from the nucleotide pool, thus preventing their incorporation into DNA/RNA and avoiding chromosomal lesions. This chain is dITP/XTP pyrophosphatase, found in Polaromonas naphthalenivorans (strain CJ2).